A 443-amino-acid polypeptide reads, in one-letter code: Xaa-Pro dipeptidase (443 aa).

Mn(2+) contacts are provided by aspartate 246, aspartate 257, histidine 339, glutamate 384, and glutamate 423.

The protein belongs to the peptidase M24B family. Bacterial-type prolidase subfamily. Mn(2+) is required as a cofactor.

It catalyses the reaction Xaa-L-Pro dipeptide + H2O = an L-alpha-amino acid + L-proline. Functionally, splits dipeptides with a prolyl residue in the C-terminal position. This chain is Xaa-Pro dipeptidase, found in Shigella flexneri.